Consider the following 337-residue polypeptide: Monoacylglycerol lipase ABHD6 (337 aa).

At 1–19 (MDLDVVNMFVIAGGTLALP) the chain is on the extracellular side. The chain crosses the membrane as a helical; Signal-anchor for type II membrane protein span at residues 20–42 (ILAFVASFLLWPSALIRIYYWYW). Residues 43 to 337 (RRTLGMQVRY…HSTDNSKKLD (295 aa)) are Cytoplasmic-facing. The region spanning 72-313 (PSILMLHGFS…CGHSVVMERP (242 aa)) is the AB hydrolase-1 domain. Serine 148 serves as the catalytic Nucleophile. Residues aspartate 278 and histidine 306 each act as charge relay system in the active site.

The protein belongs to the AB hydrolase superfamily.

The protein resides in the late endosome membrane. The protein localises to the lysosome membrane. It is found in the mitochondrion membrane. It carries out the reaction Hydrolyzes glycerol monoesters of long-chain fatty acids.. The enzyme catalyses 1-octanoylglycerol + H2O = octanoate + glycerol + H(+). It catalyses the reaction 1-decanoylglycerol + H2O = decanoate + glycerol + H(+). The catalysed reaction is 1-dodecanoylglycerol + H2O = dodecanoate + glycerol + H(+). It carries out the reaction 1-tetradecanoylglycerol + H2O = tetradecanoate + glycerol + H(+). The enzyme catalyses 2-hexadecanoylglycerol + H2O = glycerol + hexadecanoate + H(+). It catalyses the reaction 2-(9Z-octadecenoyl)-glycerol + H2O = glycerol + (9Z)-octadecenoate + H(+). The catalysed reaction is 1-(9Z-octadecenoyl)-glycerol + H2O = glycerol + (9Z)-octadecenoate + H(+). It carries out the reaction 2-(9Z,12Z-octadecadienoyl)-glycerol + H2O = (9Z,12Z)-octadecadienoate + glycerol + H(+). The enzyme catalyses 2-(5Z,8Z,11Z,14Z-eicosatetraenoyl)-glycerol + H2O = glycerol + (5Z,8Z,11Z,14Z)-eicosatetraenoate + H(+). It catalyses the reaction 1-(5Z,8Z,11Z,14Z-eicosatetraenoyl)-glycerol + H2O = glycerol + (5Z,8Z,11Z,14Z)-eicosatetraenoate + H(+). The catalysed reaction is 1-(9Z,12Z-octadecadienoyl)-glycerol + H2O = (9Z,12Z)-octadecadienoate + glycerol + H(+). It carries out the reaction 3-(9Z-octadecenoyl)-sn-glycero-1-phospho-(3'-(9Z-octadecenoyl)-1'-sn-glycerol) + H2O = 3-(9Z-octadecenoyl)-sn-glycero-1-phospho-(1'-sn-glycerol) + (9Z)-octadecenoate + H(+). The enzyme catalyses (S,S)-2-(9Z-octadecenoyl)-sn-glycero-1-phospho-(2'-(9Z-octadecenoyl)-1'-sn-glycerol) + H2O = (S,S)-2-(9Z-octadecenoyl)-sn-glycero-1-phospho-(1'-sn-glycerol) + (9Z)-octadecenoate + H(+). It catalyses the reaction (R,R)-2-(9Z-octadecenoyl)-sn-glycero-3-phospho-(2'-(9Z-octadecenoyl)-3'-sn-glycerol) + H2O = (R,R)-2-(9Z-octadecenoyl)-sn-glycero-3-phospho-(3'-sn-glycerol) + (9Z)-octadecenoate + H(+). Functionally, lipase that preferentially hydrolysis medium-chain saturated monoacylglycerols including 2-arachidonoylglycerol. Through 2-arachidonoylglycerol degradation may regulate endocannabinoid signaling pathways. Also has a lysophosphatidyl lipase activity with a preference for lysophosphatidylglycerol among other lysophospholipids. Also able to degrade bis(monoacylglycero)phosphate (BMP) and constitutes the major enzyme for BMP catabolism. BMP, also known as lysobisphosphatidic acid, is enriched in late endosomes and lysosomes and plays a key role in the formation of intraluminal vesicles and in lipid sorting. The sequence is that of Monoacylglycerol lipase ABHD6 from Bos taurus (Bovine).